Consider the following 364-residue polypeptide: Alanine racemase (364 aa).

Residue Lys34 is the Proton acceptor; specific for D-alanine of the active site. At Lys34 the chain carries N6-(pyridoxal phosphate)lysine. Substrate is bound at residue Arg129. The active-site Proton acceptor; specific for L-alanine is Tyr259. Met307 is a binding site for substrate.

The protein belongs to the alanine racemase family. Requires pyridoxal 5'-phosphate as cofactor.

The enzyme catalyses L-alanine = D-alanine. The protein operates within amino-acid biosynthesis; D-alanine biosynthesis; D-alanine from L-alanine: step 1/1. Its function is as follows. Catalyzes the interconversion of L-alanine and D-alanine. May also act on other amino acids. This is Alanine racemase (alr) from Coxiella burnetii (strain RSA 331 / Henzerling II).